The primary structure comprises 566 residues: Pyrophosphate--fructose 6-phosphate 1-phosphotransferase subunit beta 1 (566 aa).

At Ser-16 the chain carries Phosphoserine. Gly-105 serves as a coordination point for diphosphate. Asp-199 contacts Mg(2+). Residues 227–229, 266–267, 274–276, Glu-335, and 440–443 each bind substrate; these read TID, KY, MGR, and YEGR. The Proton acceptor role is filled by Asp-229.

This sequence belongs to the phosphofructokinase type A (PFKA) family. PPi-dependent PFK group II subfamily. Clade 'Long' sub-subfamily. Tetramer of two alpha (regulatory) and two beta (catalytic) chains. It depends on Mg(2+) as a cofactor.

The protein resides in the cytoplasm. It catalyses the reaction beta-D-fructose 6-phosphate + diphosphate = beta-D-fructose 1,6-bisphosphate + phosphate + H(+). It participates in carbohydrate degradation; glycolysis; D-glyceraldehyde 3-phosphate and glycerone phosphate from D-glucose: step 3/4. Allosterically activated by fructose 2,6-bisphosphate. Catalytic subunit of pyrophosphate--fructose 6-phosphate 1-phosphotransferase. Catalyzes the phosphorylation of D-fructose 6-phosphate, the first committing step of glycolysis. Uses inorganic phosphate (PPi) as phosphoryl donor instead of ATP like common ATP-dependent phosphofructokinases (ATP-PFKs), which renders the reaction reversible, and can thus function both in glycolysis and gluconeogenesis. The polypeptide is Pyrophosphate--fructose 6-phosphate 1-phosphotransferase subunit beta 1 (Arabidopsis thaliana (Mouse-ear cress)).